A 437-amino-acid polypeptide reads, in one-letter code: MQVSLETTSGLERRLTVGVPAEQVENEVENRLKQAARNVTIKGFRKGKVPLSVVKQRFGAGIRQEVVGDVINRSFYAAVQKENLKPAGQPSIQPKQLSAGQDLEYIAVFEVYPSVELSDLSVFEITRHKAEVTDVDVDNMIDVLRKHQATWTQVERAAADGDQVNINFVGTKDGVEFAGGKADNQNLILGSNSMIPGFEAGLVGLKSGDQKTLALTFPEDYHSEELKGAAVEFAVTVNSVSEAVLPELNKEFFQKFGVEKGGEKQFRKEVKANMERELGNALKAKVKGQVMDALVASHTVDVPKALVANEIQVLRNQMLQRFGGQQQNFDVKSLLPDTMFQEEASRRVTLGLIVGEIVKSAKLKPDAKRIKSMIEEIASTYQEPQEVIDYYNSNQELLAGVESAVLEDQVVDHILSKAKVSDVDSTYDDVIKSKAQR.

The PPIase FKBP-type domain maps to 161–246; the sequence is GDQVNINFVG…VNSVSEAVLP (86 aa).

It belongs to the FKBP-type PPIase family. Tig subfamily.

It is found in the cytoplasm. The enzyme catalyses [protein]-peptidylproline (omega=180) = [protein]-peptidylproline (omega=0). In terms of biological role, involved in protein export. Acts as a chaperone by maintaining the newly synthesized protein in an open conformation. Functions as a peptidyl-prolyl cis-trans isomerase. The polypeptide is Trigger factor (Cellvibrio japonicus (strain Ueda107) (Pseudomonas fluorescens subsp. cellulosa)).